The primary structure comprises 266 residues: GTP-binding protein Rhes (266 aa).

26–33 (GASRVGKS) is a binding site for GTP. Residues 48–56 (YTPTIEDFH) carry the Effector region motif. GTP contacts are provided by residues 73 to 77 (DTSGN) and 140 to 143 (NKND). Positions 189-235 (MAKLPHEMSPALHRKISVQYGDAFHPRPFCMRRVKEMDAYGMVSPFA) are interaction with GNB1, GNB2 and GNB3. Cysteine 263 bears the Cysteine methyl ester mark. Residue cysteine 263 is the site of S-farnesyl cysteine attachment. Positions 264-266 (TIQ) are cleaved as a propeptide — removed in mature form.

This sequence belongs to the small GTPase superfamily. RasD family. As to quaternary structure, monomer (Potential). Interacts with PIK3CA and UBE2I. Interacts with GNB1, GNB2 and GNB3. Interacts with HTT; interacts with mutant HTT (mHTT) with a much higher affinity than wild type HTT. In terms of processing, farnesylated. Farnesylation is required for membrane targeting. As to expression, pancreatic endocrine cells (islets of Langerhans).

It localises to the cell membrane. Functionally, GTPase signaling protein that binds to and hydrolyzes GTP. Regulates signaling pathways involving G-proteins-coupled receptor and heterotrimeric proteins such as GNB1, GNB2 and GNB3. May be involved in selected striatal competencies, mainly locomotor activity and motor coordination. In Homo sapiens (Human), this protein is GTP-binding protein Rhes (RASD2).